The following is a 480-amino-acid chain: Bifunctional protein GlmU (480 aa).

Residues 1–247 (MATPIDVVIM…AAQVAGVNSP (247 aa)) are pyrophosphorylase. UDP-N-acetyl-alpha-D-glucosamine contacts are provided by residues K24, Q86, 91–92 (GT), 113–115 (SGD), G150, E172, and N245. D115 provides a ligand contact to Mg(2+). N245 is a binding site for Mg(2+). The segment at 248 to 268 (VQLAELERVYQLRQATALMEQ) is linker. Residues 269 to 480 (GVRLADPARF…WKRPVKVSKG (212 aa)) form an N-acetyltransferase region. Residues R355 and K373 each coordinate UDP-N-acetyl-alpha-D-glucosamine. The active-site Proton acceptor is the H385. The UDP-N-acetyl-alpha-D-glucosamine site is built by Y388 and N399. Acetyl-CoA is bound by residues A402, 408–409 (NY), S427, G445, and R462.

In the N-terminal section; belongs to the N-acetylglucosamine-1-phosphate uridyltransferase family. The protein in the C-terminal section; belongs to the transferase hexapeptide repeat family. In terms of assembly, homotrimer. The cofactor is Mg(2+).

The protein resides in the cytoplasm. The catalysed reaction is alpha-D-glucosamine 1-phosphate + acetyl-CoA = N-acetyl-alpha-D-glucosamine 1-phosphate + CoA + H(+). The enzyme catalyses N-acetyl-alpha-D-glucosamine 1-phosphate + UTP + H(+) = UDP-N-acetyl-alpha-D-glucosamine + diphosphate. Its pathway is nucleotide-sugar biosynthesis; UDP-N-acetyl-alpha-D-glucosamine biosynthesis; N-acetyl-alpha-D-glucosamine 1-phosphate from alpha-D-glucosamine 6-phosphate (route II): step 2/2. The protein operates within nucleotide-sugar biosynthesis; UDP-N-acetyl-alpha-D-glucosamine biosynthesis; UDP-N-acetyl-alpha-D-glucosamine from N-acetyl-alpha-D-glucosamine 1-phosphate: step 1/1. It functions in the pathway bacterial outer membrane biogenesis; LPS lipid A biosynthesis. Catalyzes the last two sequential reactions in the de novo biosynthetic pathway for UDP-N-acetylglucosamine (UDP-GlcNAc). The C-terminal domain catalyzes the transfer of acetyl group from acetyl coenzyme A to glucosamine-1-phosphate (GlcN-1-P) to produce N-acetylglucosamine-1-phosphate (GlcNAc-1-P), which is converted into UDP-GlcNAc by the transfer of uridine 5-monophosphate (from uridine 5-triphosphate), a reaction catalyzed by the N-terminal domain. The sequence is that of Bifunctional protein GlmU from Polaromonas sp. (strain JS666 / ATCC BAA-500).